The primary structure comprises 473 residues: MKILYSLRRFYHVETLFNGTFVLAGRDQETTGFAWWAGNARLINLSGKLLGAHVAHAGLIVFWAGAMNLFEVAHFVPEKPMYEQGLILLPHLATLGWGVGPGGEVLDTFPYFVSGVLHLISSAVLGFGGIYHALLGPETLEESFPFFGYVWKDRNKMTTILGIHLILLGIGAFLLVLKALYFGGIYDTWAPGGGDVRKITNLTLSPGVIFGYLLKSPFGGEGWIVSVDDLEDIIGGHVWLGFICVFGGIWHILTKPFAWARRAFVWSGEAYLSYSLGALSVFGFIACCFVWFNNTAYPSEFYGPTGPEASQAQAFTFLVRDQRLGANVGSAQGPTGLGKYLMRSPTGEVIFGGETMRFWDLRAPWLEPLRGPNGLDLSRLKKDIQPWQERRSAEYMTHAPLGSLNSVGGVATEINAVNYVSPRSWLATSHFVLGFFFFVGHLWHAGRARAAAAGFEKGIDRDLEPVLYMTPLN.

The propeptide occupies 1 to 14; that stretch reads MKILYSLRRFYHVE. The residue at position 15 (T15) is an N-acetylthreonine. T15 bears the Phosphothreonine mark. 5 helical membrane passes run 69-93, 134-155, 178-200, 255-275, and 291-312; these read LFEV…PHLA, LLGP…KDRN, KALY…RKIT, KPFA…LSYS, and WFNN…ASQA. E367 lines the [CaMn4O5] cluster pocket. Residues 447–471 form a helical membrane-spanning segment; it reads RARAAAAGFEKGIDRDLEPVLYMTP.

This sequence belongs to the PsbB/PsbC family. PsbC subfamily. PSII is composed of 1 copy each of membrane proteins PsbA, PsbB, PsbC, PsbD, PsbE, PsbF, PsbH, PsbI, PsbJ, PsbK, PsbL, PsbM, PsbT, PsbX, PsbY, PsbZ, Psb30/Ycf12, at least 3 peripheral proteins of the oxygen-evolving complex and a large number of cofactors. It forms dimeric complexes. Binds multiple chlorophylls and provides some of the ligands for the Ca-4Mn-5O cluster of the oxygen-evolving complex. It may also provide a ligand for a Cl- that is required for oxygen evolution. PSII binds additional chlorophylls, carotenoids and specific lipids. is required as a cofactor.

The protein resides in the plastid. It is found in the chloroplast thylakoid membrane. Its function is as follows. One of the components of the core complex of photosystem II (PSII). It binds chlorophyll and helps catalyze the primary light-induced photochemical processes of PSII. PSII is a light-driven water:plastoquinone oxidoreductase, using light energy to abstract electrons from H(2)O, generating O(2) and a proton gradient subsequently used for ATP formation. The chain is Photosystem II CP43 reaction center protein from Oryza nivara (Indian wild rice).